A 319-amino-acid chain; its full sequence is Ribonuclease Z (319 aa).

Zn(2+) contacts are provided by His62, His64, Asp66, His67, His145, Asp215, and His273. Asp66 functions as the Proton acceptor in the catalytic mechanism.

The protein belongs to the RNase Z family. As to quaternary structure, homodimer. Zn(2+) serves as cofactor.

It catalyses the reaction Endonucleolytic cleavage of RNA, removing extra 3' nucleotides from tRNA precursor, generating 3' termini of tRNAs. A 3'-hydroxy group is left at the tRNA terminus and a 5'-phosphoryl group is left at the trailer molecule.. Zinc phosphodiesterase, which displays some tRNA 3'-processing endonuclease activity. Probably involved in tRNA maturation, by removing a 3'-trailer from precursor tRNA. The chain is Ribonuclease Z from Borreliella afzelii (strain PKo) (Borrelia afzelii).